Consider the following 215-residue polypeptide: Cytochrome b6 (215 aa).

At 1 to 31 (MANVYDWFQERLEIQALADDVTSKYVPPHVN) the chain is on the cytoplasmic side. A helical transmembrane segment spans residues 32–52 (IFYCLGGITLTCFLIQFATGF). Position 35 (Cys35) interacts with heme c. Over 53-89 (AMTFYYKPTVTEAYASVQYIMNEVSFGWLIRSIHRWS) the chain is Lumenal, thylakoid. Arg83, His86, His100, and Arg103 together coordinate heme b. A helical membrane pass occupies residues 90 to 110 (ASMMVLMMILHVFRVYLTGGF). At 111 to 115 (KKPRE) the chain is on the cytoplasmic side. Residues 116–136 (LTWISGVILAVITVSFGVTGY) traverse the membrane as a helical segment. Residues 137–185 (SLPWDQVGYWAVKIVSGVPEAIPVVGVLISDLLRGGSSVGQATLTRYYS) are Lumenal, thylakoid-facing. Residues 186 to 206 (AHTFVLPWLIAVFMLLHFLMI) traverse the membrane as a helical segment. Heme b contacts are provided by His187 and His202. The Cytoplasmic portion of the chain corresponds to 207–215 (RKQGISGPL). Lys208 contributes to the heme c binding site.

The protein belongs to the cytochrome b family. PetB subfamily. As to quaternary structure, the 4 large subunits of the cytochrome b6-f complex are cytochrome b6, subunit IV (17 kDa polypeptide, PetD), cytochrome f and the Rieske protein, while the 4 small subunits are PetG, PetL, PetM and PetN. The complex functions as a dimer. The cofactor is heme b. Heme c serves as cofactor.

The protein localises to the cellular thylakoid membrane. Its function is as follows. Component of the cytochrome b6-f complex, which mediates electron transfer between photosystem II (PSII) and photosystem I (PSI), cyclic electron flow around PSI, and state transitions. The sequence is that of Cytochrome b6 from Mastigocladus laminosus (Fischerella sp.).